The sequence spans 696 residues: UvrABC system protein C (696 aa).

A GIY-YIG domain is found at 16–95 (TEPGVYKFRD…IKRFDPRFNV (80 aa)). A UVR domain is found at 208–243 (DKVTRKLNADMMAAAEELDFERAARLRDDLEAIDKV).

This sequence belongs to the UvrC family. In terms of assembly, interacts with UvrB in an incision complex.

It is found in the cytoplasm. In terms of biological role, the UvrABC repair system catalyzes the recognition and processing of DNA lesions. UvrC both incises the 5' and 3' sides of the lesion. The N-terminal half is responsible for the 3' incision and the C-terminal half is responsible for the 5' incision. In Corynebacterium glutamicum (strain ATCC 13032 / DSM 20300 / JCM 1318 / BCRC 11384 / CCUG 27702 / LMG 3730 / NBRC 12168 / NCIMB 10025 / NRRL B-2784 / 534), this protein is UvrABC system protein C.